A 469-amino-acid polypeptide reads, in one-letter code: Keratin, type I cytoskeletal 16 (469 aa).

The disordered stretch occupies residues 1–20 (MATCSRQFTSSSSMKGSCGI). The tract at residues 1 to 112 (MATCSRQFTS…GIGDGLLVGS (112 aa)) is head. The interval 113–148 (EKVTMQNLNDRLATYLDKVRALEEANRDLEVKIRDW) is coil 1A. In terms of domain architecture, IF rod spans 113–424 (EKVTMQNLND…RLLDGENIHS (312 aa)). The interval 149–166 (YQRQRPTEIKDYSPYFKT) is linker 1. A coil 1B region spans residues 167–258 (IEDLKSKIII…KNHEEEMLAL (92 aa)). Residues 259–281 (RGQTGGDVNVEMDAAPGVDLSRI) are linker 12. The tract at residues 282–420 (LNEMRDQYEQ…ATYRRLLDGE (139 aa)) is coil 2. Residues 421–469 (NIHSSSQHSSGQSYSSREVFSSSSRQPRSILKEQGSTSFSQSQSQSSRD) are tail. Residues 422–469 (IHSSSQHSSGQSYSSREVFSSSSRQPRSILKEQGSTSFSQSQSQSSRD) are disordered. 2 stretches are compositionally biased toward low complexity: residues 423 to 444 (HSSSQHSSGQSYSSREVFSSSS) and 454 to 469 (QGSTSFSQSQSQSSRD).

It belongs to the intermediate filament family. In terms of assembly, heterodimer of a type I and a type II keratin. KRT16 associates with KRT6 isomers (KRT6A or KRT6B). Interacts with TCHP. Interacts with TRADD. Expressed in the epithelia of the tongue, upper and lower palate, footpad, proximal nail fold and nail bed, penile spine, sweat gland ducts, and back epidermis (at protein level). Expressed in upper suprabasal layers of the corneal epithelium (at protein level). Expressed in internal stratified epithelia in the esophagus and vagina (at protein level). Expressed in transitional stratified squamous epithelia in the forestomach, anal canal, and nasal cavity (at protein level). Expressed in transitional epithelia of the ureter, bladder and urethra (at protein level). In mature hair follicles, expressed in the companion layer of the outer root sheath during anagen and in the club hair sheath during catagen and telogen (at protein level).

Epidermis-specific type I keratin that plays a key role in skin. Acts as a regulator of innate immunity in response to skin barrier breach: required for some inflammatory checkpoint for the skin barrier maintenance. The protein is Keratin, type I cytoskeletal 16 (Krt16) of Mus musculus (Mouse).